The primary structure comprises 486 residues: mRNA cap guanine-N(7) methyltransferase (486 aa).

Residues 1 to 92 (MAGGADLDEP…ADRKAARERA (92 aa)) form a disordered region. 3 stretches are compositionally biased toward basic and acidic residues: residues 9–28 (EPPR…DSTH), 35–54 (VPRD…EPAR), and 82–92 (EADRKAARERA). An mRNA cap 0 methyltransferase domain is found at 135–486 (SRIKGLRSFN…FYVGFCFYKV (352 aa)). MRNA is bound at residue 144-145 (NN). S-adenosyl-L-methionine-binding positions include K148, G177, D201, D247, 281–283 (MFC), and Y286. A compositionally biased stretch (basic and acidic residues) spans 333-351 (VEMKKKQAEAGDGSKKDDG). Residues 333–365 (VEMKKKQAEAGDGSKKDDGGDAEEGELDEPEVE) form a disordered region. Acidic residues predominate over residues 352-363 (GDAEEGELDEPE).

This sequence belongs to the class I-like SAM-binding methyltransferase superfamily. mRNA cap 0 methyltransferase family.

It is found in the nucleus. The catalysed reaction is a 5'-end (5'-triphosphoguanosine)-ribonucleoside in mRNA + S-adenosyl-L-methionine = a 5'-end (N(7)-methyl 5'-triphosphoguanosine)-ribonucleoside in mRNA + S-adenosyl-L-homocysteine. In terms of biological role, responsible for methylating the 5'-cap structure of mRNAs. This chain is mRNA cap guanine-N(7) methyltransferase (ABD1), found in Pyricularia oryzae (strain 70-15 / ATCC MYA-4617 / FGSC 8958) (Rice blast fungus).